A 116-amino-acid chain; its full sequence is Large ribosomal subunit protein bL19 (116 aa).

This sequence belongs to the bacterial ribosomal protein bL19 family.

Its function is as follows. This protein is located at the 30S-50S ribosomal subunit interface and may play a role in the structure and function of the aminoacyl-tRNA binding site. In Shewanella loihica (strain ATCC BAA-1088 / PV-4), this protein is Large ribosomal subunit protein bL19.